A 408-amino-acid polypeptide reads, in one-letter code: Histone acetyltransferase type B subunit 2 (408 aa).

5 WD repeats span residues 120-160 (KHEQ…KDHG), 167-207 (YHKE…NKSP), 213-253 (VHTD…AIQK), 255-295 (SVSS…KPLH), and 299-339 (GHED…AEQQ). Residues 341-345 (DDAYD) form an interaction with the histone H4 N-terminus region. One copy of the WD 6 repeat lies at 356–396 (GHRSPVNEFSHNSNVPWLMCSVEEENVLQIWKPANKIVRPP).

The protein belongs to the WD repeat RBAP46/RBAP48/MSI1 family. Component of the HAT-B complex composed of at least HAT1 and HAT2. The HAT-B complex binds to histone H4 tail.

It is found in the cytoplasm. Its subcellular location is the nucleus. Functionally, regulatory subunit of the histone acetylase B (HAT-B) complex. The complex acetylates 'Lys-12' of histone H4 which is required for telomeric silencing. This is Histone acetyltransferase type B subunit 2 (HAT2) from Kluyveromyces lactis (strain ATCC 8585 / CBS 2359 / DSM 70799 / NBRC 1267 / NRRL Y-1140 / WM37) (Yeast).